Consider the following 52-residue polypeptide: uncharacterized protein (52 aa).

Residues 1–52 (MSLRPCLTPSSMQYSDIYIPTPTPTHHTHTPTPHPHPHTHTHTHHNPNPTLF) form a disordered region. Residues 35–45 (PHPHTHTHTHH) show a composition bias toward basic residues.

This is an uncharacterized protein from Saccharomyces cerevisiae (strain ATCC 204508 / S288c) (Baker's yeast).